The following is a 1248-amino-acid chain: MNGGGASGGDGYDSDGYSFAPPTPTTLSMSIPPELAGAIPLIDRFQVEGFLKAMQKQIHSAGKRGFFSKKSVGPHVREKFTLEDMLCFQKDPIPTSLLKISSDLVSRSIKLFHVILKYMGIDSPAIISLDERIELVAKLYKHTLKRSELRDELFAQISKQTRNNPDRAWLIRAWELMYLCASSMPPSKDIGAYLSEYVHYIAHGATTDSDVRVLALNTLNALKRSVKAGPRVTIPAREEIEALLSSRKLTTIVFFLDETFEEITYDMATTVADAVEELAGIIKLSVYSSFSLFECRKVVNGSKSSDVGNEEYIGLDDNKYIGDLLSEFKAAKDRNKGEILHCKLVFKKRLFRESDEAITDPMFVQLSYVQLQHDYILGNYPVGRDDAAQLSALQILVEIGFVDNPESCVEWISLLERFLPRQVAITRAKRDWELDIVSRYQLMEHLSKDDARQQFLRILRTLPYGNSVFFSVRKIDDPIGLLPGRIILGINKRGVHFFRPVPKEYLHSAELRDIMQFGSSNTAVFFKMRVAGVLHIFQFETKQGEEICVALQTHINDVMLRRYSKARSATSAVSQNDVSQTYKPPNIEIYEKRVQELSKAVEESERKADLLNEELQKKTKQERDMQKELEGLRDTLQSERQSIKEVTNDLDKLKSLCDEKDSSLQASLMEKTRLETRLKSGQGQESSNRTGVSGNHFERDTLPTVGTVNNSIEMLAKLEEELKSCKKELDASKELSKKLTMENNLLDQKVQRLERAKSEEKSNMERVYEDECCKLKSRIAELEQKLESRTRSLNVTESTLALRNAEVDTLQNSLKELDELREFKADVDRKNQQTAEILKRQGAQLIELENLYKQEQVLRKRYYNTIEDMKGKIRVFCRLRPLNDKELIEKDKNIVCSPDEFTVAHPWKDDKSKQHIYDRVFDANTTQEEVFEDTKYLVQSAVDGYNVCIFAYGQTGSGKTFTIYGSENNPGLTPRATSELFRVIKRDGHKYSFSLKAYMVELYQDNLVDLLLAKNATHQKLEIKKDSKGVVTVENVTVVNISSFEELRAIILRGSERRHTAGTNMNVESSRSHLILSIIIESTNLQTQSYARGKLSFVDLAGSERVKKSGSAGKQLKEAQSINKSLSALADVIGALSSDGQHIPYRNHKLTMLMSDSLGGNAKTLMFVNVSPAESNLEETYNSLMYASRVRCIVNDTSKHVAPKEIMRLKKLIAYWKEQAGKRSEDDDLEEIQEERTPKEKADNRLTS.

The region spanning 88-244 (FQKDPIPTSL…PAREEIEALL (157 aa)) is the MyTH4 domain. The region spanning 249-563 (LTTIVFFLDE…HINDVMLRRY (315 aa)) is the FERM domain. Residues 586 to 659 (NIEIYEKRVQ…LDKLKSLCDE (74 aa)) are a coiled coil. The disordered stretch occupies residues 675 to 704 (ETRLKSGQGQESSNRTGVSGNHFERDTLPT). The span at 679-693 (KSGQGQESSNRTGVS) shows a compositional bias: polar residues. Residues 708–799 (VNNSIEMLAK…TRSLNVTEST (92 aa)) are a coiled coil. Residues 872-1193 (KIRVFCRLRP…LMYASRVRCI (322 aa)) enclose the Kinesin motor domain. 953–960 (GQTGSGKT) contacts ATP. A calmodulin-binding region spans residues 1201 to 1223 (VAPKEIMRLKKLIAYWKEQAGKR). The tract at residues 1220 to 1248 (AGKRSEDDDLEEIQEERTPKEKADNRLTS) is disordered. Residues 1234 to 1248 (EERTPKEKADNRLTS) are compositionally biased toward basic and acidic residues.

Belongs to the TRAFAC class myosin-kinesin ATPase superfamily. Kinesin family. KIN-14 subfamily. Binds microtubules via its N-terminus containing the MyTH4 domain and binds F-actin via its FERM domain. Binding to calmodulin inhibits microtubule binding activity.

It localises to the cytoplasm. The protein localises to the cytoskeleton. Functionally, minus-end microtubule-dependent motor protein involved in the regulation of cell division. This is Kinesin-like protein KIN-14I from Oryza sativa subsp. japonica (Rice).